We begin with the raw amino-acid sequence, 114 residues long: Phosphoribosyl-AMP cyclohydrolase (114 aa).

Residue Asp-76 coordinates Mg(2+). Zn(2+) is bound at residue Cys-77. The Mg(2+) site is built by Asp-78 and Asp-80. Residues Cys-93 and Cys-100 each coordinate Zn(2+).

This sequence belongs to the PRA-CH family. In terms of assembly, homodimer. Mg(2+) is required as a cofactor. The cofactor is Zn(2+).

It is found in the cytoplasm. It catalyses the reaction 1-(5-phospho-beta-D-ribosyl)-5'-AMP + H2O = 1-(5-phospho-beta-D-ribosyl)-5-[(5-phospho-beta-D-ribosylamino)methylideneamino]imidazole-4-carboxamide. Its pathway is amino-acid biosynthesis; L-histidine biosynthesis; L-histidine from 5-phospho-alpha-D-ribose 1-diphosphate: step 3/9. Its function is as follows. Catalyzes the hydrolysis of the adenine ring of phosphoribosyl-AMP. In Streptococcus gordonii (strain Challis / ATCC 35105 / BCRC 15272 / CH1 / DL1 / V288), this protein is Phosphoribosyl-AMP cyclohydrolase.